The primary structure comprises 184 residues: Photosystem I assembly protein Ycf4 (184 aa).

2 helical membrane-spanning segments follow: residues 19–39 and 57–77; these read ISNF…LLVG and IIFF…LFIS.

The protein belongs to the Ycf4 family.

Its subcellular location is the plastid. The protein localises to the chloroplast thylakoid membrane. Functionally, seems to be required for the assembly of the photosystem I complex. This Cucumis sativus (Cucumber) protein is Photosystem I assembly protein Ycf4.